The following is a 272-amino-acid chain: MSTAKKDYKRITTKSLIEMKSNGEKISMLTAYDYTMAKIVDTAGVDVILVGDSASNVMAGHETTLPITLDQMIYHASSVVRAVERGLVVVDLPFGSYQSDPKEALRSAIRIMKESGAHAVKLEGGKEIKESIKKILNAGIPVMGHLGLTPQSIYKFGTYSVRAKEEQEAEKLIEDAQMLEKVGCFGVVLEKIPADLAKKVADSISIPVIGIGAGGAVDGQVLVIHDMLGMNNEFSPRFLRRYLNLYEEMTKAIGQYAADVKSSDFPNASEQY.

Asp-52 and Asp-91 together coordinate Mg(2+). 3-methyl-2-oxobutanoate is bound by residues 52–53, Asp-91, and Lys-121; that span reads DS. Glu-123 is a binding site for Mg(2+). Glu-190 (proton acceptor) is an active-site residue.

It belongs to the PanB family. Homodecamer; pentamer of dimers. Mg(2+) serves as cofactor.

Its subcellular location is the cytoplasm. The enzyme catalyses 3-methyl-2-oxobutanoate + (6R)-5,10-methylene-5,6,7,8-tetrahydrofolate + H2O = 2-dehydropantoate + (6S)-5,6,7,8-tetrahydrofolate. It functions in the pathway cofactor biosynthesis; (R)-pantothenate biosynthesis; (R)-pantoate from 3-methyl-2-oxobutanoate: step 1/2. Functionally, catalyzes the reversible reaction in which hydroxymethyl group from 5,10-methylenetetrahydrofolate is transferred onto alpha-ketoisovalerate to form ketopantoate. The chain is 3-methyl-2-oxobutanoate hydroxymethyltransferase from Flavobacterium johnsoniae (strain ATCC 17061 / DSM 2064 / JCM 8514 / BCRC 14874 / CCUG 350202 / NBRC 14942 / NCIMB 11054 / UW101) (Cytophaga johnsonae).